Reading from the N-terminus, the 537-residue chain is Probable quinate permease (537 aa).

At 1–22 the chain is on the cytoplasmic side; sequence MSILSLVEDRPTPKEVYNWKIY. Residues 23–43 form a helical membrane-spanning segment; the sequence is LLAAVASCTSCMIGYDSAFIG. Residues 44-74 lie on the Extracellular side of the membrane; it reads TTISLQSFKDEFDWDSMSAAHQDLVSSNIVS. A helical membrane pass occupies residues 75-95; sequence LYQAGAFFGAFFAYPIGHFWG. The Cytoplasmic segment spans residues 96–97; the sequence is RK. The helical transmembrane segment at 98–118 threads the bilayer; it reads WGLMVSALIFTLGAGIMLGTN. Topologically, residues 119–130 are extracellular; it reads GDRGFGLLYGGR. A helical transmembrane segment spans residues 131-151; sequence VLAGLGVGAGSNITPIYISEL. The Cytoplasmic portion of the chain corresponds to 152-159; sequence SPPAIRGR. The helical transmembrane segment at 160 to 180 threads the bilayer; it reads LVGVYELGWQIGGLVGFWICY. Residues 181-193 are Extracellular-facing; that stretch reads GVDETLPPSHKQW. A helical transmembrane segment spans residues 194-214; sequence IIPFAVQLIPSGLLIIGALFL. At 215–285 the chain is on the cytoplasmic side; that stretch reads KESPRWLFLR…AWTNKKILYR (71 aa). The helical transmembrane segment at 286-306 threads the bilayer; that stretch reads LFLGSMLFFWQNGSGINAINY. Over 307–325 the chain is Extracellular; sequence YSPTVFKSIGVTGSNTSLF. The chain crosses the membrane as a helical span at residues 326-346; that stretch reads TTGIFGVVKTVVTFIWLLWLI. Topologically, residues 347 to 352 are cytoplasmic; it reads DRVGRR. Residues 353 to 373 form a helical membrane-spanning segment; sequence LLLLIGAAGGSICLWIVGAYI. The Extracellular segment spans residues 374-387; the sequence is KIARPSERENKQMD. Residues 388–408 traverse the membrane as a helical segment; sequence GGGIAAMFFFYLWTVFYTPSW. Topologically, residues 409–456 are cytoplasmic; that stretch reads NGTPWVINSEMFDPNIRSLAQACAAGSNWLWNFLISRFTPQMFAKMDY. A helical transmembrane segment spans residues 457–477; the sequence is GVYFFFASLMILSIIFVFFLI. Over 478 to 537 the chain is Extracellular; it reads PETKGIPLESMDRLFETQPIWRAHGTLLKQIREDEERFRHDLEDSGFVKSTDRQVEVVDA.

This sequence belongs to the major facilitator superfamily. Sugar transporter (TC 2.A.1.1) family. Interacts with creB. Post-translationally, ubiquitinated. Deubiquitinated by creB, probably to control its activity or amount.

Its subcellular location is the cell membrane. In terms of biological role, integral membrane transporter that imports quinic acid to be catabolized as a carbon source. The protein is Probable quinate permease (qutD) of Aspergillus flavus (strain ATCC 200026 / FGSC A1120 / IAM 13836 / NRRL 3357 / JCM 12722 / SRRC 167).